The sequence spans 139 residues: Putative pre-16S rRNA nuclease (139 aa).

The protein belongs to the YqgF nuclease family.

The protein resides in the cytoplasm. In terms of biological role, could be a nuclease involved in processing of the 5'-end of pre-16S rRNA. The polypeptide is Putative pre-16S rRNA nuclease (Photorhabdus laumondii subsp. laumondii (strain DSM 15139 / CIP 105565 / TT01) (Photorhabdus luminescens subsp. laumondii)).